A 120-amino-acid polypeptide reads, in one-letter code: FK506-binding protein 1A (120 aa).

Residues glycine 26–lysine 114 form the PPIase FKBP-type domain.

Belongs to the FKBP-type PPIase family. FKBP1 subfamily.

Its subcellular location is the cytoplasm. It catalyses the reaction [protein]-peptidylproline (omega=180) = [protein]-peptidylproline (omega=0). Functionally, PPIases accelerate the folding of proteins. It catalyzes the cis-trans isomerization of proline imidic peptide bonds in oligopeptides. The protein is FK506-binding protein 1A (fkr-2) of Neurospora crassa (strain ATCC 24698 / 74-OR23-1A / CBS 708.71 / DSM 1257 / FGSC 987).